The following is a 423-amino-acid chain: UDP-N-acetylglucosamine 1-carboxyvinyltransferase (423 aa).

22 to 23 (KN) serves as a coordination point for phosphoenolpyruvate. Arginine 93 contacts UDP-N-acetyl-alpha-D-glucosamine. The active-site Proton donor is the cysteine 117. Cysteine 117 carries the post-translational modification 2-(S-cysteinyl)pyruvic acid O-phosphothioketal. UDP-N-acetyl-alpha-D-glucosamine contacts are provided by residues 122–126 (RPVDL), aspartate 308, and isoleucine 330.

It belongs to the EPSP synthase family. MurA subfamily.

It is found in the cytoplasm. It catalyses the reaction phosphoenolpyruvate + UDP-N-acetyl-alpha-D-glucosamine = UDP-N-acetyl-3-O-(1-carboxyvinyl)-alpha-D-glucosamine + phosphate. It functions in the pathway cell wall biogenesis; peptidoglycan biosynthesis. Cell wall formation. Adds enolpyruvyl to UDP-N-acetylglucosamine. In Maricaulis maris (strain MCS10) (Caulobacter maris), this protein is UDP-N-acetylglucosamine 1-carboxyvinyltransferase.